A 1174-amino-acid polypeptide reads, in one-letter code: PR domain zinc finger protein 15 (1174 aa).

The 111-residue stretch at 75-185 (SNLEIRRLDD…AGTELRVWYA (111 aa)) folds into the SET domain. The segment at 252–307 (LPAGGQQHEAASEKEPDAPRMEPPTAAESKSIQSVMVTKEPKKKPRRGRKPKASKV) is disordered. The span at 261-271 (AASEKEPDAPR) shows a compositional bias: basic and acidic residues. Residues 292–304 (PKKKPRRGRKPKA) are compositionally biased toward basic residues. 2 consecutive C2H2-type zinc fingers follow at residues 402–424 (HQCG…VRSH) and 434–457 (FKCE…SYKH). The segment at 468–486 (YRCGSCGKTFRMESALEFH) adopts a C2H2-type 3; degenerate zinc-finger fold. C2H2-type zinc fingers lie at residues 495–517 (FQCE…KKKH) and 522–544 (FACE…QRRH). Residue lysine 552 forms a Glycyl lysine isopeptide (Lys-Gly) (interchain with G-Cter in SUMO2) linkage. 2 consecutive C2H2-type zinc fingers follow at residues 571–593 (SGCP…LLTH) and 598–620 (YTCE…IHVH). The interval 639-658 (IGISSEENDDNSDESADSEP) is disordered. A compositionally biased stretch (acidic residues) spans 644 to 655 (EENDDNSDESAD). 8 consecutive C2H2-type zinc fingers follow at residues 661–684 (YSCK…MEVH), 689–711 (HGCS…MVIH), 725–747 (HPCE…KLIH), 753–775 (HACE…MRVH), 781–803 (YLCA…MKLH), 809–831 (YECK…YKRH), 837–859 (FMCE…KLIH), and 865–888 (WTCS…QLTH). 2 disordered regions span residues 957–1007 (AEGK…GDET) and 1147–1174 (LQPP…MYSY). The span at 962 to 973 (GKAAKRSHKRKQ) shows a compositional bias: basic residues. Low complexity predominate over residues 1154–1174 (AAPQQAVQPQVQNEQQQMYSY).

As to expression, expressed in embryonic stem cells (ESCs) (at protein level).

The protein localises to the nucleus. In terms of biological role, sequence-specific DNA-binding transcriptional regulator. Plays a role as a molecular node in a transcriptional network regulating embryonic development and cell fate decision. Stimulates the expression of upstream key transcriptional activators and repressors of the Wnt/beta-catenin and MAPK/ERK pathways, respectively, that are essential for naive pluripotency and self-renewal maintenance of embryonic stem cells (ESCs). Specifically promotes SPRY1 and RSPO1 transcription activation through recognition and direct binding of a specific DNA sequence in their promoter regions. Also plays a role in induced pluripotent stem cells (iPSCs) reprogramming. Involved in early embryo development. This is PR domain zinc finger protein 15 from Mus musculus (Mouse).